A 417-amino-acid polypeptide reads, in one-letter code: Tyrosine--tRNA ligase (417 aa).

Position 39 (Tyr39) interacts with L-tyrosine. Residues 44–53 (ATATSLHIGN) carry the 'HIGH' region motif. L-tyrosine is bound by residues Tyr176 and Gln180. Residues 236–240 (KMGKS) carry the 'KMSKS' region motif. Residue Lys239 coordinates ATP. Residues 350 to 416 (IGILSLLVTA…GKKKHVLVRP (67 aa)) enclose the S4 RNA-binding domain.

The protein belongs to the class-I aminoacyl-tRNA synthetase family. TyrS type 1 subfamily. As to quaternary structure, homodimer.

The protein localises to the cytoplasm. It catalyses the reaction tRNA(Tyr) + L-tyrosine + ATP = L-tyrosyl-tRNA(Tyr) + AMP + diphosphate + H(+). Its function is as follows. Catalyzes the attachment of tyrosine to tRNA(Tyr) in a two-step reaction: tyrosine is first activated by ATP to form Tyr-AMP and then transferred to the acceptor end of tRNA(Tyr). In Mesorhizobium japonicum (strain LMG 29417 / CECT 9101 / MAFF 303099) (Mesorhizobium loti (strain MAFF 303099)), this protein is Tyrosine--tRNA ligase.